The sequence spans 1041 residues: DNA polymerase catalytic subunit (1041 aa).

A disordered region spans residues 1–23 (MAFFNPYFKSKNKGSDMPPKQSM).

The protein belongs to the DNA polymerase type-B family.

It localises to the host nucleus. It carries out the reaction DNA(n) + a 2'-deoxyribonucleoside 5'-triphosphate = DNA(n+1) + diphosphate. It catalyses the reaction Endonucleolytic cleavage to 5'-phosphomonoester.. Functionally, replicates viral genomic DNA. The replication complex is composed of six viral proteins: the DNA polymerase, processivity factor, primase, primase-associated factor, helicase, and ssDNA-binding protein. Additionally, the polymerase contains an intrinsic ribonuclease H (RNase H) activity that specifically degrades RNA/DNA heteroduplexes or duplex DNA substrates in the 5' to 3' direction. Therefore, it can catalyze the excision of the RNA primers that initiate the synthesis of Okazaki fragments at a replication fork during viral DNA replication. This Elephantid herpesvirus 1 (isolate Asian elephant/Berlin/Kiba/1998) (EIHV-1) protein is DNA polymerase catalytic subunit.